A 537-amino-acid polypeptide reads, in one-letter code: MMVDFSPSRRRMGTQELSLKPQVETPGIKLLAVMFCRYHLIRQLKQVQAASRTRYAHSVPQSRPTLKERLAALHEKQQLSLLPPDAVKRVSENNPAVLIDCDARTLLQLFLAALQTDPQKTTLSELLSQEEGFSVFIHRLLPTYTPSSDLKHLVSKDGTTALLQKLYGFYREQFADAPIGRPSPGRLHDANSFARWFMAESKLRLARTVFAELVGNPTELAKLPRDTETIITLLQLHLGAKHIFWRDPGNSVGRGGQLFTPAHMAVVTAYNSLGEETLLRLLRLLQSDPQWKSVCSPDLDRNIILALAFHNRLDLVHAQAARYYAPAAPGHGLPSTPLLPDGALVGAVVTAFAFKHQLAQGLAIAYQFLDRFTHLPNEHELWKIIFTWLARRHPTGSQGAALYDEAWSKMRTRYAEHGQPTPYDYSIARASYRIVRRDSSLRRVRALLNDYMSPLYQQPAVAPRDRLLLLKCQAHIVGRLVRARRNSAAADFVDQWALDSEARSHLLEHIAARASSRTDADDDDAGDGLYLTGAPLW.

It belongs to the AEP2 family. Binds to the 5'UTR of the OLI1 mRNA.

Its subcellular location is the mitochondrion. Its function is as follows. Required for translation of the mitochondrial OLI1 transcript coding for the mitochondrial ATP synthase subunit 9. The sequence is that of ATPase expression protein 2, mitochondrial (AEP2) from Eremothecium gossypii (strain ATCC 10895 / CBS 109.51 / FGSC 9923 / NRRL Y-1056) (Yeast).